The following is a 1081-amino-acid chain: Mediator of RNA polymerase II transcription subunit 15 (1081 aa).

Ser-2 bears the N-acetylserine mark. Positions 25–49 (LQVLMDINTLNGGSSDTADKIRIHA) are interaction with GCN4. Residues 238-286 (QAQAQANNNNNGLPQNGNINNNINIPQQQQMQPPNSSANNNPLQQQSSQ) are disordered. Ser-335 carries the post-translational modification Phosphoserine. 11 consecutive repeat copies span residues 422 to 423 (QA), 424 to 425 (QA), 426 to 427 (QA), 428 to 429 (QA), 430 to 431 (QA), 432 to 433 (QA), 434 to 435 (QA), 436 to 437 (QA), 438 to 439 (QA), 440 to 441 (QA), and 442 to 443 (QA). Residues 422–481 (QAQAQAQAQAQAQAQAQAQAQAAQAAQAQAQAQAQAQAQAQAQAQAQAQAQAQAQAQAQA) are 30 X 2 AA approximate tandem repeats of Q-A. The stretch at 444 to 445 (AQ) is one 12; approximate repeat. A 13; approximate repeat occupies 446 to 447 (AA). 17 consecutive repeat copies span residues 448–449 (QA), 450–451 (QA), 452–453 (QA), 454–455 (QA), 456–457 (QA), 458–459 (QA), 460–461 (QA), 462–463 (QA), 464–465 (QA), 466–467 (QA), 468–469 (QA), 470–471 (QA), 472–473 (QA), 474–475 (QA), 476–477 (QA), 478–479 (QA), and 480–481 (QA). A compositionally biased stretch (low complexity) spans 476–497 (QAQAQAHAQHQPSQQPQQAQQQ). Disordered stretches follow at residues 476–505 (QAQA…HGLT) and 692–712 (QQQQ…YSAM). A phosphoserine mark is found at Ser-736, Ser-752, Ser-783, Ser-785, and Ser-789. Residues 744–836 (PVSAAATPSL…KTVQSPMGAQ (93 aa)) are disordered. The span at 749 to 836 (ATPSLNKTIN…KTVQSPMGAQ (88 aa)) shows a compositional bias: polar residues. Residue Thr-793 is modified to Phosphothreonine. A phosphoserine mark is found at Ser-831, Ser-1003, Ser-1008, Ser-1018, and Ser-1034. The tract at residues 1026 to 1055 (DSKKIKVDSPDDPFMTKSGATTSEKQEVTN) is disordered.

Belongs to the Mediator complex subunit 15 family. Component of the Mediator complex, which is composed of at least 21 subunits that form three structurally distinct submodules. The Mediator head module contains MED6, MED8, MED11, SRB4/MED17, SRB5/MED18, ROX3/MED19, SRB2/MED20 and SRB6/MED22, the middle module contains MED1, MED4, NUT1/MED5, MED7, CSE2/MED9, NUT2/MED10, SRB7/MED21 and SOH1/MED31, and the tail module contains MED2, PGD1/MED3, RGR1/MED14, GAL11/MED15 and SIN4/MED16. The head and the middle modules interact directly with RNA polymerase II, whereas the elongated tail module interacts with gene-specific regulatory proteins. GAL11/MED15 interacts with the activator GAL4; the interaction is direct. GAL11/MED15 interacts (via multiple regions) with the activator GCN4; the interaction is direct.

It is found in the nucleus. Functionally, component of the Mediator complex, a coactivator involved in the regulated transcription of nearly all RNA polymerase II-dependent genes. Mediator functions as a bridge to convey information from gene-specific regulatory proteins to the basal RNA polymerase II transcription machinery. The Mediator complex, having a compact conformation in its free form, is recruited to promoters by direct interactions with regulatory proteins and serves for the assembly of a functional pre-initiation complex with RNA polymerase II and the general transcription factors. The Mediator complex unfolds to an extended conformation and partially surrounds RNA polymerase II, specifically interacting with the unphosphorylated form of the C-terminal domain (CTD) of RNA polymerase II. The Mediator complex dissociates from the RNA polymerase II holoenzyme and stays at the promoter when transcriptional elongation begins. It has an important role in the negative regulation of Ty transcription. The polypeptide is Mediator of RNA polymerase II transcription subunit 15 (Saccharomyces cerevisiae (strain ATCC 204508 / S288c) (Baker's yeast)).